The chain runs to 283 residues: Ribosomal RNA small subunit methyltransferase A (283 aa).

The S-adenosyl-L-methionine site is built by Asn-13, Leu-15, Gly-39, Glu-59, Asp-87, and Asn-108.

Belongs to the class I-like SAM-binding methyltransferase superfamily. rRNA adenine N(6)-methyltransferase family. RsmA subfamily.

The protein localises to the cytoplasm. It carries out the reaction adenosine(1518)/adenosine(1519) in 16S rRNA + 4 S-adenosyl-L-methionine = N(6)-dimethyladenosine(1518)/N(6)-dimethyladenosine(1519) in 16S rRNA + 4 S-adenosyl-L-homocysteine + 4 H(+). Its function is as follows. Specifically dimethylates two adjacent adenosines (A1518 and A1519) in the loop of a conserved hairpin near the 3'-end of 16S rRNA in the 30S particle. May play a critical role in biogenesis of 30S subunits. The chain is Ribosomal RNA small subunit methyltransferase A from Helicobacter hepaticus (strain ATCC 51449 / 3B1).